A 218-amino-acid chain; its full sequence is Cytochrome c biogenesis ATP-binding export protein CcmA (218 aa).

Positions 12–217 (LHAEQLSSIR…KLSLEYRGEV (206 aa)) constitute an ABC transporter domain. Residue 44–51 (GPNGAGKS) participates in ATP binding.

It belongs to the ABC transporter superfamily. CcmA exporter (TC 3.A.1.107) family. In terms of assembly, the complex is composed of two ATP-binding proteins (CcmA) and two transmembrane proteins (CcmB).

The protein resides in the cell inner membrane. The enzyme catalyses heme b(in) + ATP + H2O = heme b(out) + ADP + phosphate + H(+). Part of the ABC transporter complex CcmAB involved in the biogenesis of c-type cytochromes; once thought to export heme, this seems not to be the case, but its exact role is uncertain. Responsible for energy coupling to the transport system. This chain is Cytochrome c biogenesis ATP-binding export protein CcmA, found in Idiomarina loihiensis (strain ATCC BAA-735 / DSM 15497 / L2-TR).